Here is a 417-residue protein sequence, read N- to C-terminus: Serine hydroxymethyltransferase (417 aa).

Residues L122 and 126–128 (GHL) each bind (6S)-5,6,7,8-tetrahydrofolate. K230 carries the post-translational modification N6-(pyridoxal phosphate)lysine. 355-357 (SPF) provides a ligand contact to (6S)-5,6,7,8-tetrahydrofolate.

The protein belongs to the SHMT family. In terms of assembly, homodimer. Pyridoxal 5'-phosphate serves as cofactor.

The protein resides in the cytoplasm. It carries out the reaction (6R)-5,10-methylene-5,6,7,8-tetrahydrofolate + glycine + H2O = (6S)-5,6,7,8-tetrahydrofolate + L-serine. It functions in the pathway one-carbon metabolism; tetrahydrofolate interconversion. The protein operates within amino-acid biosynthesis; glycine biosynthesis; glycine from L-serine: step 1/1. Its function is as follows. Catalyzes the reversible interconversion of serine and glycine with tetrahydrofolate (THF) serving as the one-carbon carrier. This reaction serves as the major source of one-carbon groups required for the biosynthesis of purines, thymidylate, methionine, and other important biomolecules. Also exhibits THF-independent aldolase activity toward beta-hydroxyamino acids, producing glycine and aldehydes, via a retro-aldol mechanism. In Francisella tularensis subsp. novicida (strain U112), this protein is Serine hydroxymethyltransferase.